The chain runs to 503 residues: Glutamate/gamma-aminobutyrate antiporter (503 aa).

33-43 (LHLVFFLLLGG) provides a ligand contact to L-glutamate. 7 helical membrane passes run 35 to 55 (LVFF…LCAA), 153 to 173 (FVVG…AYFI), 194 to 214 (VSTL…EASA), 232 to 252 (ILLV…VAAV), 366 to 386 (LTVV…FVLI), 407 to 427 (IIAG…FVPP), and 440 to 460 (MILL…YELH).

This sequence belongs to the amino acid-polyamine-organocation (APC) superfamily. Glutamate:GABA antiporter (GGA) (TC 2.A.3.7) family.

It localises to the cell membrane. The catalysed reaction is 4-aminobutanoate(in) + L-glutamate(out) = 4-aminobutanoate(out) + L-glutamate(in). In terms of biological role, involved in glutaminase-dependent acid resistance. Exchanges extracellular glutamate (Glu) for intracellular gamma-aminobutyric acid (GABA) under acidic conditions. The chain is Glutamate/gamma-aminobutyrate antiporter from Lactococcus lactis subsp. cremoris (strain MG1363).